The chain runs to 154 residues: Myoglobin (154 aa).

The region spanning 2 to 148 is the Globin domain; it reads GLSDGEWQLV…FRNDIAAKYK (147 aa). S4 bears the Phosphoserine mark. H65 contributes to the nitrite binding site. H65 lines the O2 pocket. T68 is modified (phosphothreonine). Residue H94 participates in heme b binding.

The protein belongs to the globin family. Monomeric.

The protein localises to the cytoplasm. It is found in the sarcoplasm. The catalysed reaction is Fe(III)-heme b-[protein] + nitric oxide + H2O = Fe(II)-heme b-[protein] + nitrite + 2 H(+). It carries out the reaction H2O2 + AH2 = A + 2 H2O. Functionally, monomeric heme protein which primary function is to store oxygen and facilitate its diffusion within muscle tissues. Reversibly binds oxygen through a pentacoordinated heme iron and enables its timely and efficient release as needed during periods of heightened demand. Depending on the oxidative conditions of tissues and cells, and in addition to its ability to bind oxygen, it also has a nitrite reductase activity whereby it regulates the production of bioactive nitric oxide. Under stress conditions, like hypoxia and anoxia, it also protects cells against reactive oxygen species thanks to its pseudoperoxidase activity. The sequence is that of Myoglobin (MB) from Lutra lutra (European river otter).